The sequence spans 108 residues: Small ribosomal subunit protein uS10 (108 aa).

The protein belongs to the universal ribosomal protein uS10 family. As to quaternary structure, part of the 30S ribosomal subunit.

In terms of biological role, involved in the binding of tRNA to the ribosomes. The polypeptide is Small ribosomal subunit protein uS10 (Mycoplasma pneumoniae (strain ATCC 29342 / M129 / Subtype 1) (Mycoplasmoides pneumoniae)).